We begin with the raw amino-acid sequence, 122 residues long: Serum amyloid A-2 protein (122 aa).

A signal peptide spans 1 to 18; it reads MKPFLSIIFCFLVLGVDS. Position 19 is a pyrrolidone carboxylic acid (glutamine 19). Residues 100–122 form a disordered region; sequence ANEWGRSGKDPNFFRPPGLPSKY.

Belongs to the SAA family. As to quaternary structure, apolipoprotein of the HDL complex. Expressed by the liver; secreted in plasma.

It localises to the secreted. In terms of biological role, major acute phase reactant. The protein is Serum amyloid A-2 protein (SAA2) of Mesocricetus auratus (Golden hamster).